Consider the following 184-residue polypeptide: ATP synthase subunit delta (184 aa).

Belongs to the ATPase delta chain family. As to quaternary structure, F-type ATPases have 2 components, F(1) - the catalytic core - and F(0) - the membrane proton channel. F(1) has five subunits: alpha(3), beta(3), gamma(1), delta(1), epsilon(1). F(0) has three main subunits: a(1), b(2) and c(10-14). The alpha and beta chains form an alternating ring which encloses part of the gamma chain. F(1) is attached to F(0) by a central stalk formed by the gamma and epsilon chains, while a peripheral stalk is formed by the delta and b chains.

Its subcellular location is the cell inner membrane. In terms of biological role, f(1)F(0) ATP synthase produces ATP from ADP in the presence of a proton or sodium gradient. F-type ATPases consist of two structural domains, F(1) containing the extramembraneous catalytic core and F(0) containing the membrane proton channel, linked together by a central stalk and a peripheral stalk. During catalysis, ATP synthesis in the catalytic domain of F(1) is coupled via a rotary mechanism of the central stalk subunits to proton translocation. Its function is as follows. This protein is part of the stalk that links CF(0) to CF(1). It either transmits conformational changes from CF(0) to CF(1) or is implicated in proton conduction. The chain is ATP synthase subunit delta from Rhizorhabdus wittichii (strain DSM 6014 / CCUG 31198 / JCM 15750 / NBRC 105917 / EY 4224 / RW1) (Sphingomonas wittichii).